Consider the following 227-residue polypeptide: Prolactin (227 aa).

An N-terminal signal peptide occupies residues 1-28; it reads MNIKGSPWKGSLLLLLVSNLLLCQSVAP. C32 and C39 form a disulfide bridge. S54 carries the phosphoserine modification. Residue N59 is glycosylated (N-linked (GlcNAc...) asparagine; partial). S62, S118, S163, and S194 each carry phosphoserine. 2 disulfide bridges follow: C86/C202 and C219/C227.

It belongs to the somatotropin/prolactin family. As to quaternary structure, interacts with PRLR.

It is found in the secreted. Its function is as follows. Prolactin acts primarily on the mammary gland by promoting lactation. The polypeptide is Prolactin (PRL) (Homo sapiens (Human)).